The primary structure comprises 242 residues: Protein GrpE (242 aa).

Over residues 1 to 10 (MAGENSSTET) the composition is skewed to polar residues. Residues 1 to 64 (MAGENSSTET…QSTESTSKEK (64 aa)) form a disordered region. The segment covering 11–20 (KNQEINEKTP) has biased composition (basic and acidic residues). 2 stretches are compositionally biased toward polar residues: residues 21 to 32 (EVQTFETNVEFE) and 40 to 59 (DTEL…STES).

It belongs to the GrpE family. In terms of assembly, homodimer.

It localises to the cytoplasm. Participates actively in the response to hyperosmotic and heat shock by preventing the aggregation of stress-denatured proteins, in association with DnaK and GrpE. It is the nucleotide exchange factor for DnaK and may function as a thermosensor. Unfolded proteins bind initially to DnaJ; upon interaction with the DnaJ-bound protein, DnaK hydrolyzes its bound ATP, resulting in the formation of a stable complex. GrpE releases ADP from DnaK; ATP binding to DnaK triggers the release of the substrate protein, thus completing the reaction cycle. Several rounds of ATP-dependent interactions between DnaJ, DnaK and GrpE are required for fully efficient folding. This chain is Protein GrpE, found in Trichodesmium erythraeum (strain IMS101).